The primary structure comprises 532 residues: Probable inorganic phosphate transporter 1-9 (532 aa).

Residues methionine 1–alanine 22 are Cytoplasmic-facing. The chain crosses the membrane as a helical span at residues isoleucine 23–isoleucine 43. Over methionine 44–leucine 62 the chain is Extracellular. A helical membrane pass occupies residues serine 63–leucine 83. Residues glycine 84 to lysine 91 are Cytoplasmic-facing. Residues valine 92–cysteine 112 form a helical membrane-spanning segment. The Extracellular segment spans residues threonine 113 to glycine 124. A helical transmembrane segment spans residues phenylalanine 125–methionine 145. Residues serine 146 to arginine 154 are Cytoplasmic-facing. Residues glycine 155–valine 175 form a helical membrane-spanning segment. The Extracellular portion of the chain corresponds to threonine 176–serine 207. The chain crosses the membrane as a helical span at residues aspartate 208–tryptophan 228. Topologically, residues arginine 229–leucine 292 are cytoplasmic. The helical transmembrane segment at histidine 293–threonine 313 threads the bilayer. Residues serine 314 to lysine 343 are Extracellular-facing. A helical transmembrane segment spans residues leucine 344–isoleucine 364. The Cytoplasmic portion of the chain corresponds to aspartate 365 to lysine 371. Residues isoleucine 372–serine 392 traverse the membrane as a helical segment. Residues tryptophan 393–methionine 406 are Extracellular-facing. The chain crosses the membrane as a helical span at residues valine 407–isoleucine 427. Residues proline 428–histidine 441 are Cytoplasmic-facing. Residues glycine 442–alanine 462 form a helical membrane-spanning segment. The Extracellular portion of the chain corresponds to threonine 463–arginine 478. A helical membrane pass occupies residues isoleucine 479 to threonine 499. Residues arginine 500–tyrosine 532 are Cytoplasmic-facing. The tract at residues glutamate 509 to tyrosine 532 is disordered. Residues valine 515–alanine 524 are compositionally biased toward polar residues.

This sequence belongs to the major facilitator superfamily. Phosphate:H(+) symporter (TC 2.A.1.9) family.

The protein resides in the membrane. High-affinity transporter for external inorganic phosphate. In Arabidopsis thaliana (Mouse-ear cress), this protein is Probable inorganic phosphate transporter 1-9 (PHT1-9).